The sequence spans 391 residues: Phosphoglycerate kinase (391 aa).

Residues 21–23, R36, 59–62, R113, and R146 contribute to the substrate site; these read DLN and HLGR. Residues K197, E319, and 345 to 348 each bind ATP; that span reads GGDT.

This sequence belongs to the phosphoglycerate kinase family. In terms of assembly, monomer.

It localises to the cytoplasm. It carries out the reaction (2R)-3-phosphoglycerate + ATP = (2R)-3-phospho-glyceroyl phosphate + ADP. It functions in the pathway carbohydrate degradation; glycolysis; pyruvate from D-glyceraldehyde 3-phosphate: step 2/5. The chain is Phosphoglycerate kinase from Pseudoalteromonas translucida (strain TAC 125).